The sequence spans 197 residues: Adenylate kinase (197 aa).

16–21 (GAGKGT) lines the ATP pocket. The interval 36–65 (STGDILRDHVARGTELGQQVKPILDAGHLV) is NMP. AMP is bound by residues Thr-37, Arg-42, 63–65 (HLV), 90–93 (GFPR), and Gln-97. Residues 131–147 (ERGNQAQARGEAVRSDD) form an LID region. Arg-132 lines the ATP pocket. AMP contacts are provided by Arg-144 and Arg-155. Gly-183 serves as a coordination point for ATP.

This sequence belongs to the adenylate kinase family. In terms of assembly, monomer.

The protein resides in the cytoplasm. The enzyme catalyses AMP + ATP = 2 ADP. The protein operates within purine metabolism; AMP biosynthesis via salvage pathway; AMP from ADP: step 1/1. Its function is as follows. Catalyzes the reversible transfer of the terminal phosphate group between ATP and AMP. Plays an important role in cellular energy homeostasis and in adenine nucleotide metabolism. This is Adenylate kinase from Deinococcus deserti (strain DSM 17065 / CIP 109153 / LMG 22923 / VCD115).